Consider the following 97-residue polypeptide: Small ribosomal subunit protein bS6 (97 aa).

It belongs to the bacterial ribosomal protein bS6 family.

In terms of biological role, binds together with bS18 to 16S ribosomal RNA. This chain is Small ribosomal subunit protein bS6, found in Syntrophomonas wolfei subsp. wolfei (strain DSM 2245B / Goettingen).